The chain runs to 106 residues: MPFFDVQKRLGVDLDRWMTIQSAEQPHKIPSRCHAFEKEWIECAHGIGSIRAEKECKIEFEDFRECLLRQKTMKRLHAIRRQREKLIKEGKYTPPPHHSGQEEPRS.

The region spanning 30–74 is the CHCH domain; sequence PSRCHAFEKEWIECAHGIGSIRAEKECKIEFEDFRECLLRQKTMK. Short sequence motifs (cx9C motif) lie at residues 33–43 and 56–66; these read CHAFEKEWIEC and CKIEFEDFREC. 2 disulfide bridges follow: C33-C66 and C43-C56. The interval 84–106 is disordered; it reads EKLIKEGKYTPPPHHSGQEEPRS.

Belongs to the complex I NDUFS5 subunit family. In terms of assembly, mammalian complex I is composed of 45 different subunits. This is a component of the iron-sulfur (IP) fragment of the enzyme.

The protein resides in the mitochondrion inner membrane. It localises to the mitochondrion intermembrane space. Functionally, accessory subunit of the mitochondrial membrane respiratory chain NADH dehydrogenase (Complex I), that is believed not to be involved in catalysis. Complex I functions in the transfer of electrons from NADH to the respiratory chain. The immediate electron acceptor for the enzyme is believed to be ubiquinone. This Bos taurus (Bovine) protein is NADH dehydrogenase [ubiquinone] iron-sulfur protein 5 (NDUFS5).